Consider the following 725-residue polypeptide: Ribosomal RNA large subunit methyltransferase K/L (725 aa).

Residues 45–156 (SGYRACLWSR…RGRLSLGIDL (112 aa)) form the THUMP domain.

It belongs to the methyltransferase superfamily. RlmKL family.

The protein localises to the cytoplasm. It catalyses the reaction guanosine(2445) in 23S rRNA + S-adenosyl-L-methionine = N(2)-methylguanosine(2445) in 23S rRNA + S-adenosyl-L-homocysteine + H(+). It carries out the reaction guanosine(2069) in 23S rRNA + S-adenosyl-L-methionine = N(2)-methylguanosine(2069) in 23S rRNA + S-adenosyl-L-homocysteine + H(+). Functionally, specifically methylates the guanine in position 2445 (m2G2445) and the guanine in position 2069 (m7G2069) of 23S rRNA. The polypeptide is Ribosomal RNA large subunit methyltransferase K/L (Marinobacter nauticus (strain ATCC 700491 / DSM 11845 / VT8) (Marinobacter aquaeolei)).